The primary structure comprises 176 residues: 3-hydroxydecanoyl-[acyl-carrier-protein] dehydratase (176 aa).

Residue His71 is part of the active site.

This sequence belongs to the thioester dehydratase family. FabA subfamily. In terms of assembly, homodimer.

The protein resides in the cytoplasm. The catalysed reaction is a (3R)-hydroxyacyl-[ACP] = a (2E)-enoyl-[ACP] + H2O. It carries out the reaction (3R)-hydroxydecanoyl-[ACP] = (2E)-decenoyl-[ACP] + H2O. It catalyses the reaction (2E)-decenoyl-[ACP] = (3Z)-decenoyl-[ACP]. It participates in lipid metabolism; fatty acid biosynthesis. Functionally, necessary for the introduction of cis unsaturation into fatty acids. Catalyzes the dehydration of (3R)-3-hydroxydecanoyl-ACP to E-(2)-decenoyl-ACP and then its isomerization to Z-(3)-decenoyl-ACP. Can catalyze the dehydratase reaction for beta-hydroxyacyl-ACPs with saturated chain lengths up to 16:0, being most active on intermediate chain length. The chain is 3-hydroxydecanoyl-[acyl-carrier-protein] dehydratase from Rhodopseudomonas palustris (strain BisA53).